We begin with the raw amino-acid sequence, 498 residues long: ATP synthase subunit beta, chloroplastic (498 aa).

The residue at position 6 (Thr6) is a Phosphothreonine. Phosphoserine is present on Ser13. Residue 172-179 participates in ATP binding; the sequence is GGAGVGKT.

The protein belongs to the ATPase alpha/beta chains family. As to quaternary structure, F-type ATPases have 2 components, CF(1) - the catalytic core - and CF(0) - the membrane proton channel. CF(1) has five subunits: alpha(3), beta(3), gamma(1), delta(1), epsilon(1). CF(0) has four main subunits: a(1), b(1), b'(1) and c(9-12).

It is found in the plastid. The protein resides in the chloroplast thylakoid membrane. The enzyme catalyses ATP + H2O + 4 H(+)(in) = ADP + phosphate + 5 H(+)(out). Its function is as follows. Produces ATP from ADP in the presence of a proton gradient across the membrane. The catalytic sites are hosted primarily by the beta subunits. The protein is ATP synthase subunit beta, chloroplastic of Brassica napus (Rape).